Here is a 414-residue protein sequence, read N- to C-terminus: Succinylornithine transaminase (414 aa).

Lys260 is subject to N6-(pyridoxal phosphate)lysine.

It belongs to the class-III pyridoxal-phosphate-dependent aminotransferase family. AstC subfamily. The cofactor is pyridoxal 5'-phosphate.

The catalysed reaction is N(2)-succinyl-L-ornithine + 2-oxoglutarate = N-succinyl-L-glutamate 5-semialdehyde + L-glutamate. It participates in amino-acid degradation; L-arginine degradation via AST pathway; L-glutamate and succinate from L-arginine: step 3/5. Its function is as follows. Catalyzes the transamination of N(2)-succinylornithine and alpha-ketoglutarate into N(2)-succinylglutamate semialdehyde and glutamate. Can also act as an acetylornithine aminotransferase. This chain is Succinylornithine transaminase, found in Yersinia pseudotuberculosis serotype I (strain IP32953).